The primary structure comprises 226 residues: ATP synthase subunit a (226 aa).

The next 5 membrane-spanning stretches (helical) occupy residues leucine 18 to leucine 38, phenylalanine 74 to phenylalanine 94, leucine 100 to isoleucine 120, leucine 162 to methionine 182, and isoleucine 187 to alanine 207.

It belongs to the ATPase A chain family. As to quaternary structure, F-type ATPases have 2 components, CF(1) - the catalytic core - and CF(0) - the membrane proton channel. CF(1) has five subunits: alpha(3), beta(3), gamma(1), delta(1), epsilon(1). CF(0) has three main subunits: a, b and c.

The protein resides in the mitochondrion inner membrane. Mitochondrial membrane ATP synthase (F(1)F(0) ATP synthase or Complex V) produces ATP from ADP in the presence of a proton gradient across the membrane which is generated by electron transport complexes of the respiratory chain. F-type ATPases consist of two structural domains, F(1) - containing the extramembraneous catalytic core and F(0) - containing the membrane proton channel, linked together by a central stalk and a peripheral stalk. During catalysis, ATP synthesis in the catalytic domain of F(1) is coupled via a rotary mechanism of the central stalk subunits to proton translocation. Key component of the proton channel; it may play a direct role in the translocation of protons across the membrane. The polypeptide is ATP synthase subunit a (Aedes aegypti (Yellowfever mosquito)).